The chain runs to 589 residues: PTS system mannitol-specific EIICB component (589 aa).

Topologically, residues 1-25 (MEEKVSLKVRVQKLGTSLSNMVMPN) are cytoplasmic. A PTS EIIC type-2 domain is found at 14-347 (LGTSLSNMVM…LHADKSTEDS (334 aa)). A helical membrane pass occupies residues 26–47 (IGAFIAWGVLTALFIADGYLPN). The Extracellular segment spans residues 48–51 (EQLA). The chain crosses the membrane as a helical span at residues 52–72 (TVVGPMLTYLLPILIGYTGGY). The Cytoplasmic portion of the chain corresponds to 73 to 135 (MIHGQRGAVV…PGFEMLVNNF (63 aa)). Residues 136–157 (SAGLVGFALLLLAFYAIGPVVS) form a helical membrane-spanning segment. Topologically, residues 158–166 (TLTGAVGNG) are extracellular. Residues 167 to 187 (VEAIVNARLLPMANIIIEPAK) traverse the membrane as a helical segment. The Cytoplasmic segment spans residues 188–274 (VLFLNNALNH…VMMKPTLFLA (87 aa)). The helical transmembrane segment at 275-294 (AMAGGISGTFTFQLLDAGLK) threads the bilayer. The Extracellular portion of the chain corresponds to 295-316 (SPASPGSIIAIMATAPKGVWPH). The chain crosses the membrane as a helical span at residues 317-338 (LNILLGVLVAAVVSFLIAALIL). The Cytoplasmic segment spans residues 339–589 (HADKSTEDSL…YDKMAARMYK (251 aa)). One can recognise a PTS EIIB type-2 domain in the interval 381 to 476 (EKIIFACDAG…SLTGASPIAE (96 aa)). C387 (phosphocysteine intermediate; for EIIB activity) is an active-site residue. C387 is modified (phosphocysteine; by EIIA).

Homodimer.

It localises to the cell membrane. The catalysed reaction is D-mannitol(out) + N(pros)-phospho-L-histidyl-[protein] = D-mannitol 1-phosphate(in) + L-histidyl-[protein]. The phosphoenolpyruvate-dependent sugar phosphotransferase system (sugar PTS), a major carbohydrate active transport system, catalyzes the phosphorylation of incoming sugar substrates concomitantly with their translocation across the cell membrane. The enzyme II CmtAB PTS system is involved in D-mannitol transport. The sequence is that of PTS system mannitol-specific EIICB component (mtlA) from Streptococcus pneumoniae (strain ATCC BAA-255 / R6).